The sequence spans 459 residues: ATP synthase subunit beta (459 aa).

149 to 156 (GGAGVGKT) contacts ATP.

The protein belongs to the ATPase alpha/beta chains family. As to quaternary structure, F-type ATPases have 2 components, CF(1) - the catalytic core - and CF(0) - the membrane proton channel. CF(1) has five subunits: alpha(3), beta(3), gamma(1), delta(1), epsilon(1). CF(0) has three main subunits: a(1), b(2) and c(9-12). The alpha and beta chains form an alternating ring which encloses part of the gamma chain. CF(1) is attached to CF(0) by a central stalk formed by the gamma and epsilon chains, while a peripheral stalk is formed by the delta and b chains.

It is found in the cell inner membrane. The catalysed reaction is ATP + H2O + 4 H(+)(in) = ADP + phosphate + 5 H(+)(out). Functionally, produces ATP from ADP in the presence of a proton gradient across the membrane. The catalytic sites are hosted primarily by the beta subunits. The polypeptide is ATP synthase subunit beta (Pseudomonas savastanoi pv. phaseolicola (strain 1448A / Race 6) (Pseudomonas syringae pv. phaseolicola (strain 1448A / Race 6))).